Here is a 181-residue protein sequence, read N- to C-terminus: MSFVPTKVFFTKGVGRHKEYLSSFELALRDAKIEKCNLVTVSSIFPPKCERISVEEGLKHLKPGQITFAVMARNSTNENNRLISASVGVALPADESQYGYLSEHHPYGETAEQSGEYAEDLAATMLATTLGIEFDPNKDWDEREGIYKMSGKIVNSFNITESAEGETGMWTTVISCAVLLP.

The residue at position 43 (S43) is a Pyruvic acid (Ser).

It belongs to the PdaD family. Requires pyruvate as cofactor.

It carries out the reaction L-arginine + H(+) = agmatine + CO2. The protein is Probable pyruvoyl-dependent arginine decarboxylase of Chlorobaculum tepidum (strain ATCC 49652 / DSM 12025 / NBRC 103806 / TLS) (Chlorobium tepidum).